A 225-amino-acid polypeptide reads, in one-letter code: Methylthioribulose-1-phosphate dehydratase (225 aa).

2 residues coordinate Zn(2+): His-106 and His-108.

The protein belongs to the aldolase class II family. MtnB subfamily. Requires Zn(2+) as cofactor.

The catalysed reaction is 5-(methylsulfanyl)-D-ribulose 1-phosphate = 5-methylsulfanyl-2,3-dioxopentyl phosphate + H2O. It participates in amino-acid biosynthesis; L-methionine biosynthesis via salvage pathway; L-methionine from S-methyl-5-thio-alpha-D-ribose 1-phosphate: step 2/6. In terms of biological role, catalyzes the dehydration of methylthioribulose-1-phosphate (MTRu-1-P) into 2,3-diketo-5-methylthiopentyl-1-phosphate (DK-MTP-1-P). In Xanthomonas oryzae pv. oryzae (strain KACC10331 / KXO85), this protein is Methylthioribulose-1-phosphate dehydratase.